Reading from the N-terminus, the 118-residue chain is UPF0148 protein M1627_1409 (118 aa).

It belongs to the UPF0148 family.

This is UPF0148 protein M1627_1409 from Saccharolobus islandicus (strain M.16.27) (Sulfolobus islandicus).